A 774-amino-acid polypeptide reads, in one-letter code: Transmembrane GTPase fzo-1 (774 aa).

The segment at 1–29 (MSGTASLVHTLPASGDSNHRGLHSLKNSR) is disordered. The Cytoplasmic segment spans residues 1–617 (MSGTASLVHT…EEQAMMTQMV (617 aa)). Residues 20–29 (RGLHSLKNSR) show a composition bias toward basic residues. A coiled-coil region spans residues 51 to 71 (YGELKDNVAELEGVYKDIKEN). A Dynamin-type G domain is found at 97-352 (QRDNMKVVFF…TRALEFQNFE (256 aa)). Residues 107 to 114 (GRTSNGKS) form a G1 motif region. Residue 110–115 (SNGKST) participates in GTP binding. A G2 motif region spans residues 133–134 (TT). The interval 211-214 (DSPG) is G3 motif. Residue 270–273 (NRWD) participates in GTP binding. The G4 motif stretch occupies residues 270 to 273 (NRWD). Glutamate 300 is a region of interest (G5 motif). A GTP-binding site is contributed by serine 317. The stretch at 385–415 (NLNSVLTSAAEQRSKLQNNLNESTRTFNECR) forms a coiled coil. The chain crosses the membrane as a helical span at residues 618-638 (LTSAAFLANGSLGVLVVGGIV). The Mitochondrial intermembrane portion of the chain corresponds to 639–640 (YK). The chain crosses the membrane as a helical span at residues 641 to 661 (AVGWRVIAVGGAAYAGLYAWE). Residues 662–774 (RMRWNSGAKE…YLRSDSPPTP (113 aa)) lie on the Cytoplasmic side of the membrane.

This sequence belongs to the TRAFAC class dynamin-like GTPase superfamily. Dynamin/Fzo/YdjA family. Mitofusin subfamily. As to quaternary structure, interacts with ced-9; interaction may be suppressed by interaction of ced-9 with egl-1.

It is found in the mitochondrion outer membrane. The catalysed reaction is GTP + H2O = GDP + phosphate + H(+). Probable transmembrane GTPase. Mediates mitochondrial fusion. Fusion of mitochondria occurs in many cell types and constitutes an important step in mitochondria morphology, which is balanced between fusion and fission. Dispensable for normal apoptotic processes during embryonic development. The protein is Transmembrane GTPase fzo-1 of Caenorhabditis elegans.